A 248-amino-acid chain; its full sequence is Adenosylcobinamide-GDP ribazoletransferase (248 aa).

The next 5 helical transmembrane spans lie at 30–50 (LAESFSFFPLVGLILGFCYAL), 54–74 (VLSGVVPSLLLAVAITALTAV), 112–132 (FGALAIALAVAFKVAALDAVI), 134–154 (AGSFLPLLLVPVVSRLAMVLA), and 188–208 (AVSAFLVQPVFGLCALVLAAG).

The protein belongs to the CobS family. Mg(2+) is required as a cofactor.

Its subcellular location is the cell inner membrane. The catalysed reaction is alpha-ribazole + adenosylcob(III)inamide-GDP = adenosylcob(III)alamin + GMP + H(+). It carries out the reaction alpha-ribazole 5'-phosphate + adenosylcob(III)inamide-GDP = adenosylcob(III)alamin 5'-phosphate + GMP + H(+). Its pathway is cofactor biosynthesis; adenosylcobalamin biosynthesis; adenosylcobalamin from cob(II)yrinate a,c-diamide: step 7/7. Joins adenosylcobinamide-GDP and alpha-ribazole to generate adenosylcobalamin (Ado-cobalamin). Also synthesizes adenosylcobalamin 5'-phosphate from adenosylcobinamide-GDP and alpha-ribazole 5'-phosphate. The polypeptide is Adenosylcobinamide-GDP ribazoletransferase (Syntrophobacter fumaroxidans (strain DSM 10017 / MPOB)).